Reading from the N-terminus, the 443-residue chain is Phosphoglucosamine mutase (443 aa).

The Phosphoserine intermediate role is filled by Ser101. Residues Ser101, Asp239, Asp241, and Asp243 each coordinate Mg(2+). Ser101 is modified (phosphoserine).

It belongs to the phosphohexose mutase family. It depends on Mg(2+) as a cofactor. In terms of processing, activated by phosphorylation.

The enzyme catalyses alpha-D-glucosamine 1-phosphate = D-glucosamine 6-phosphate. Its function is as follows. Catalyzes the conversion of glucosamine-6-phosphate to glucosamine-1-phosphate. The protein is Phosphoglucosamine mutase of Francisella tularensis subsp. tularensis (strain WY96-3418).